Here is a 282-residue protein sequence, read N- to C-terminus: MTNFSSSPPIAFGDLQGCHAAYRQLFDTLAPAADTPLWFAGDLVNRGPASLATLREIVALGERAIAVLGNHDLHLLAVAAGIRTLKPGDTIGEILDAPDADDLIEWVRHRPFAHFERGMLMVHAGLLPQWDAALALELADELQRALRAPNWRDTLRSLYGNDPNCWSPDLKHADRLRVAFNAFTRIRFCTPEGAMEFRANGGPAAAPAGYLPWFDAPGRKTADVTVVFGHWAALGLMLRENLVALDSGCVWGNRLSAVRLADDPAARVVTQVACERCGAADE.

The protein belongs to the Ap4A hydrolase family.

It catalyses the reaction P(1),P(4)-bis(5'-adenosyl) tetraphosphate + H2O = 2 ADP + 2 H(+). Functionally, hydrolyzes diadenosine 5',5'''-P1,P4-tetraphosphate to yield ADP. The sequence is that of Bis(5'-nucleosyl)-tetraphosphatase, symmetrical from Burkholderia pseudomallei (strain 1106a).